A 117-amino-acid chain; its full sequence is G antigen 5 (117 aa).

The tract at residues 1–117 is disordered; the sequence is MSWRGRSTYY…PEEGEKQSQC (117 aa). 2 stretches are compositionally biased toward acidic residues: residues 32–45 and 87–96; these read FSDE…EEGE and ECEDGPDGQE. Residues 103 to 117 show a composition bias toward basic and acidic residues; sequence EEVKTPEEGEKQSQC.

This sequence belongs to the GAGE family. In terms of tissue distribution, expressed in a variety of tumor tissues but not in normal tissues, except testis.

This chain is G antigen 5 (GAGE5), found in Homo sapiens (Human).